Consider the following 77-residue polypeptide: Large ribosomal subunit protein bL28 (77 aa).

Positions 1-26 (MARVCKVTGKRPMSGNNVSHANNKTK) are disordered.

The protein belongs to the bacterial ribosomal protein bL28 family.

This Neisseria gonorrhoeae (strain ATCC 700825 / FA 1090) protein is Large ribosomal subunit protein bL28.